The primary structure comprises 382 residues: RIB43A-like with coiled-coils protein 2 (382 aa).

Residues 222–255 (NKSQAIESVERKKQEKKQEQEDNLAEITNLLRGD) are a coiled coil.

The protein belongs to the RIB43A family. In terms of assembly, microtubule inner protein component of sperm flagellar doublet microtubules. In terms of tissue distribution, expressed in airway epithelial cells.

The protein localises to the cytoplasm. It localises to the cytoskeleton. It is found in the cilium axoneme. Its subcellular location is the flagellum axoneme. Microtubule inner protein (MIP) part of the dynein-decorated doublet microtubules (DMTs) in cilia axoneme, which is required for motile cilia beating. This is RIB43A-like with coiled-coils protein 2 from Homo sapiens (Human).